Here is a 421-residue protein sequence, read N- to C-terminus: CinA-like protein (421 aa).

Belongs to the CinA family.

The polypeptide is CinA-like protein (Mycobacterium sp. (strain MCS)).